The primary structure comprises 382 residues: UDP-N-acetylglucosamine--N-acetylmuramyl-(pentapeptide) pyrophosphoryl-undecaprenol N-acetylglucosamine transferase (382 aa).

UDP-N-acetyl-alpha-D-glucosamine is bound by residues 11-13, asparagine 124, arginine 165, serine 200, isoleucine 254, and glutamine 299; that span reads TGG.

Belongs to the glycosyltransferase 28 family. MurG subfamily.

It localises to the cell inner membrane. It carries out the reaction di-trans,octa-cis-undecaprenyl diphospho-N-acetyl-alpha-D-muramoyl-L-alanyl-D-glutamyl-meso-2,6-diaminopimeloyl-D-alanyl-D-alanine + UDP-N-acetyl-alpha-D-glucosamine = di-trans,octa-cis-undecaprenyl diphospho-[N-acetyl-alpha-D-glucosaminyl-(1-&gt;4)]-N-acetyl-alpha-D-muramoyl-L-alanyl-D-glutamyl-meso-2,6-diaminopimeloyl-D-alanyl-D-alanine + UDP + H(+). Its pathway is cell wall biogenesis; peptidoglycan biosynthesis. Functionally, cell wall formation. Catalyzes the transfer of a GlcNAc subunit on undecaprenyl-pyrophosphoryl-MurNAc-pentapeptide (lipid intermediate I) to form undecaprenyl-pyrophosphoryl-MurNAc-(pentapeptide)GlcNAc (lipid intermediate II). The polypeptide is UDP-N-acetylglucosamine--N-acetylmuramyl-(pentapeptide) pyrophosphoryl-undecaprenol N-acetylglucosamine transferase (Nitratidesulfovibrio vulgaris (strain DSM 19637 / Miyazaki F) (Desulfovibrio vulgaris)).